We begin with the raw amino-acid sequence, 592 residues long: Salivary peroxidase/catechol oxidase (592 aa).

The signal sequence occupies residues 1-21 (MWMFLKLLLFVCSSWWSCAQA). An intrachain disulfide couples cysteine 24 to cysteine 37. N-linked (GlcNAc...) asparagine glycosylation occurs at asparagine 25. Histidine 110 (proton acceptor) is an active-site residue. 5 residues coordinate Ca(2+): aspartate 111, threonine 187, phenylalanine 189, aspartate 191, and serine 193. Residue asparagine 230 is glycosylated (N-linked (GlcNAc...) asparagine). A disulfide bridge links cysteine 235 with cysteine 244. Histidine 353 provides a ligand contact to heme b. N-linked (GlcNAc...) asparagine glycosylation is present at asparagine 366. 2 disulfides stabilise this stretch: cysteine 452/cysteine 509 and cysteine 553/cysteine 580.

Belongs to the peroxidase family. XPO subfamily. In terms of tissue distribution, female salivary gland.

The protein resides in the secreted. The catalysed reaction is 2 catechol + O2 = 2 1,2-benzoquinone + 2 H2O. In terms of biological role, inhibits noradrenaline-induced smooth muscle contraction in the host, probably due to the oxidation of noradrenaline, resulting in vasodilation. Exhibits peroxidase activity. This is Salivary peroxidase/catechol oxidase from Anopheles albimanus (New world malaria mosquito).